Here is a 282-residue protein sequence, read N- to C-terminus: Elongation factor Ts (282 aa).

Residues 80-83 (TDFV) are involved in Mg(2+) ion dislocation from EF-Tu.

The protein belongs to the EF-Ts family.

It is found in the cytoplasm. Functionally, associates with the EF-Tu.GDP complex and induces the exchange of GDP to GTP. It remains bound to the aminoacyl-tRNA.EF-Tu.GTP complex up to the GTP hydrolysis stage on the ribosome. The polypeptide is Elongation factor Ts (Chlamydia caviae (strain ATCC VR-813 / DSM 19441 / 03DC25 / GPIC) (Chlamydophila caviae)).